The primary structure comprises 121 residues: Small ribosomal subunit protein uS13 (121 aa).

Residues 94–121 (SLPVRGQNTKNNSRTRKGPRRTVANKKK) form a disordered region. The span at 106–121 (SRTRKGPRRTVANKKK) shows a compositional bias: basic residues.

It belongs to the universal ribosomal protein uS13 family. Part of the 30S ribosomal subunit. Forms a loose heterodimer with protein S19. Forms two bridges to the 50S subunit in the 70S ribosome.

In terms of biological role, located at the top of the head of the 30S subunit, it contacts several helices of the 16S rRNA. In the 70S ribosome it contacts the 23S rRNA (bridge B1a) and protein L5 of the 50S subunit (bridge B1b), connecting the 2 subunits; these bridges are implicated in subunit movement. Contacts the tRNAs in the A and P-sites. This is Small ribosomal subunit protein uS13 from Exiguobacterium sp. (strain ATCC BAA-1283 / AT1b).